The sequence spans 278 residues: 3-methyl-2-oxobutanoate hydroxymethyltransferase (278 aa).

2 residues coordinate Mg(2+): aspartate 49 and aspartate 88. Residues 49–50 (DS), aspartate 88, and lysine 118 contribute to the 3-methyl-2-oxobutanoate site. Mg(2+) is bound at residue glutamate 120. The active-site Proton acceptor is glutamate 186.

It belongs to the PanB family. As to quaternary structure, homodecamer; pentamer of dimers. Mg(2+) serves as cofactor.

It is found in the cytoplasm. It carries out the reaction 3-methyl-2-oxobutanoate + (6R)-5,10-methylene-5,6,7,8-tetrahydrofolate + H2O = 2-dehydropantoate + (6S)-5,6,7,8-tetrahydrofolate. It functions in the pathway cofactor biosynthesis; (R)-pantothenate biosynthesis; (R)-pantoate from 3-methyl-2-oxobutanoate: step 1/2. Its function is as follows. Catalyzes the reversible reaction in which hydroxymethyl group from 5,10-methylenetetrahydrofolate is transferred onto alpha-ketoisovalerate to form ketopantoate. This chain is 3-methyl-2-oxobutanoate hydroxymethyltransferase, found in Bordetella parapertussis (strain 12822 / ATCC BAA-587 / NCTC 13253).